Here is a 693-residue protein sequence, read N- to C-terminus: TGF-beta-activated kinase 1 and MAP3K7-binding protein 2 (693 aa).

Positions 8 to 51 constitute a CUE domain; sequence IDFQVLHDLRQKFPEVPEVVVSRCMLQNNNNLDACCAVLSQEST. Positions 91–130 are disordered; the sequence is GREGSRMNGSRTLTHSISDGQLQGGQSNSELFQQEPQTAP. Polar residues predominate over residues 97 to 130; the sequence is MNGSRTLTHSISDGQLQGGQSNSELFQQEPQTAP. Arg-173 carries the asymmetric dimethylarginine modification. The disordered stretch occupies residues 219 to 310; that stretch reads ITTPGGTTRQ…SGSSQSSAHS (92 aa). Residues 220-231 are compositionally biased toward low complexity; sequence TTPGGTTRQTQQ. The span at 232-282 shows a compositional bias: polar residues; sequence HSGWVSQFNPMNPQQVYQPSQPGPWTTCPASNPLSHTSSQQPNQQGHQTSH. The span at 286-310 shows a compositional bias: low complexity; sequence PISSPTTSQPPTIHSSGSSQSSAHS. Residue Lys-329 forms a Glycyl lysine isopeptide (Lys-Gly) (interchain with G-Cter in SUMO) linkage. Residues 330–381 form a disordered region; the sequence is LEPPQRNNSSKLRSSGPRTSSTSSSVNSQTLNRNQPTVYIAASPPNTDELMS. Low complexity predominate over residues 343–359; it reads SSGPRTSSTSSSVNSQT. Residues Ser-372, Ser-450, Ser-482, and Ser-524 each carry the phosphoserine modification. Positions 532 to 619 form a coiled coil; the sequence is YTQALLVHQK…TKEIDLFQAR (88 aa). Residue Lys-562 forms a Glycyl lysine isopeptide (Lys-Gly) (interchain with G-Cter in SUMO) linkage. Position 582 is a phosphoserine (Ser-582). A Glycyl lysine isopeptide (Lys-Gly) (interchain with G-Cter in ubiquitin) cross-link involves residue Lys-611. The interval 642–663 is disordered; that stretch reads PPKPKDQRSIIKTPKTQDTEDD. The RanBP2-type zinc finger occupies 663–693; that stretch reads DEGAQWNCTACTFLNHPALIRCEQCEMPRHF. Cys-673 carries the (Microbial infection) S-methylcysteine modification. An interaction with polyubiquitin region spans residues 675-685; the sequence is FLNHPALIRCE.

In terms of assembly, interacts with MAP3K7 and TRAF6. Identified in the TRIKA2 complex composed of MAP3K7, TAB1 and TAB2. Binds 'Lys-63'-linked polyubiquitin chains. Interacts with NCOR1 and HDAC3 to form a ternary complex. Interacts (via C-terminal) with NUMBL (via PTB domain). Interacts (via the C-terminus) with DYNC2I2 (via WD domains). Interacts with RBCK1. Interacts with TRIM5. Interacts with TRIM38 (via B30.2/SPRY domain), leading to its translocation to lysosomes and degradation. Interacts with ASB1; this interaction promotes TAB2 stability. In terms of processing, degraded in a lysosome-dependent manner following interaction with TRIM38. Post-translationally, SUMOylated by TRIM60; leading to inhibition of MAPK/NF-kappaB activation and the innate immune response. Ubiquitinated; following IL1 stimulation or TRAF6 overexpression. Ubiquitination involves RBCK1 leading to proteasomal degradation. Ubiquitinated at Lys-611 by TRIM45 leading to proteasomal degradation. In terms of processing, phosphorylated. Post-translationally, (Microbial infection) Methylated at Cys-673 by enteropathogenic E.coli protein NleE or S.flexneri protein OspZ: methylation disrupts zinc-binding and ability to bind 'Lys-63'-linked ubiquitin, leading to NF-kappa-B inactivation. Widely expressed. In the embryo, expressed in the ventricular trabeculae, endothelial cells of the conotruncal cushions of the outflow tract and in the endothelial cells lining the developing aortic valves.

The protein localises to the membrane. It localises to the endosome membrane. It is found in the lysosome membrane. The protein resides in the cytoplasm. Its subcellular location is the cytosol. Its function is as follows. Adapter required to activate the JNK and NF-kappa-B signaling pathways through the specific recognition of 'Lys-63'-linked polyubiquitin chains by its RanBP2-type zinc finger (NZF). Acts as an adapter linking MAP3K7/TAK1 and TRAF6 to 'Lys-63'-linked polyubiquitin chains. The RanBP2-type zinc finger (NZF) specifically recognizes Lys-63'-linked polyubiquitin chains unanchored or anchored to the substrate proteins such as RIPK1/RIP1 and RIPK2: this acts as a scaffold to organize a large signaling complex to promote autophosphorylation of MAP3K7/TAK1, and subsequent activation of I-kappa-B-kinase (IKK) core complex by MAP3K7/TAK1. Also recognizes and binds Lys-63'-linked polyubiquitin chains of heterotypic 'Lys-63'-/'Lys-48'-linked branched ubiquitin chains. Regulates the IL1-mediated translocation of NCOR1 out of the nucleus. Involved in heart development. This chain is TGF-beta-activated kinase 1 and MAP3K7-binding protein 2, found in Homo sapiens (Human).